The following is a 100-amino-acid chain: Urease subunit gamma (100 aa).

It belongs to the urease gamma subunit family. As to quaternary structure, heterotrimer of UreA (gamma), UreB (beta) and UreC (alpha) subunits. Three heterotrimers associate to form the active enzyme.

The protein localises to the cytoplasm. It carries out the reaction urea + 2 H2O + H(+) = hydrogencarbonate + 2 NH4(+). The protein operates within nitrogen metabolism; urea degradation; CO(2) and NH(3) from urea (urease route): step 1/1. The polypeptide is Urease subunit gamma (Staphylococcus saprophyticus subsp. saprophyticus (strain ATCC 15305 / DSM 20229 / NCIMB 8711 / NCTC 7292 / S-41)).